A 211-amino-acid polypeptide reads, in one-letter code: Ribosomal RNA small subunit methyltransferase G (211 aa).

S-adenosyl-L-methionine-binding positions include Gly73, 126-127, and Arg142; that span reads IE.

The protein belongs to the methyltransferase superfamily. RNA methyltransferase RsmG family.

The protein localises to the cytoplasm. The catalysed reaction is guanosine(527) in 16S rRNA + S-adenosyl-L-methionine = N(7)-methylguanosine(527) in 16S rRNA + S-adenosyl-L-homocysteine. Specifically methylates the N7 position of guanine in position 527 of 16S rRNA. This Methylorubrum extorquens (strain CM4 / NCIMB 13688) (Methylobacterium extorquens) protein is Ribosomal RNA small subunit methyltransferase G.